Here is a 245-residue protein sequence, read N- to C-terminus: Eukaryotic translation initiation factor 6 (245 aa).

Tyrosine 113 carries the phosphotyrosine modification. Threonine 165 is modified (phosphothreonine). The residue at position 166 (serine 166) is a Phosphoserine. Residues serine 174 and serine 175 each carry the phosphoserine; by CK1 modification. A Phosphoserine; by PKC modification is found at serine 235. A phosphoserine mark is found at serine 239 and serine 243.

This sequence belongs to the eIF-6 family. In terms of assembly, monomer. Associates with the 60S ribosomal subunit. Interacts with RACK1. Interacts with DICER1, AGO2, TARBP2, MOV10 and RPL7A; they form a large RNA-induced silencing complex (RISC). Phosphorylation at Ser-174 and Ser-175 by CSNK1D/CK1 promotes nuclear export. Post-translationally, ufmylated by UFL1.

The protein resides in the cytoplasm. Its subcellular location is the nucleus. It is found in the nucleolus. Its function is as follows. Binds to the 60S ribosomal subunit and prevents its association with the 40S ribosomal subunit to form the 80S initiation complex in the cytoplasm. Behaves as a stimulatory translation initiation factor downstream insulin/growth factors. Is also involved in ribosome biogenesis. Associates with pre-60S subunits in the nucleus and is involved in its nuclear export. Cytoplasmic release of TIF6 from 60S subunits and nuclear relocalization is promoted by a RACK1 (RACK1)-dependent protein kinase C activity. In tissues responsive to insulin, controls fatty acid synthesis and glycolysis by exerting translational control of adipogenic transcription factors such as CEBPB, CEBPD and ATF4 that have G/C rich or uORF in their 5'UTR. Required for ROS-dependent megakaryocyte maturation and platelets formation, controls the expression of mitochondrial respiratory chain genes involved in reactive oxygen species (ROS) synthesis. Involved in miRNA-mediated gene silencing by the RNA-induced silencing complex (RISC). Required for both miRNA-mediated translational repression and miRNA-mediated cleavage of complementary mRNAs by RISC. Modulates cell cycle progression and global translation of pre-B cells, its activation seems to be rate-limiting in tumorigenesis and tumor growth. This chain is Eukaryotic translation initiation factor 6 (Eif6), found in Rattus norvegicus (Rat).